The primary structure comprises 82 residues: Small ribosomal subunit protein eS27 (82 aa).

A C4-type zinc finger spans residues 37–59 (CPGCFTITTVFSHAQTVVICQGC).

The protein belongs to the eukaryotic ribosomal protein eS27 family. In terms of assembly, component of the small ribosomal subunit (SSU). Mature N.crassa ribosomes consist of a small (40S) and a large (60S) subunit. The 40S small subunit contains 1 molecule of ribosomal RNA (18S rRNA) and at least 32 different proteins. The large 60S subunit contains 3 rRNA molecules (26S, 5.8S and 5S rRNA) and at least 42 different proteins. The cofactor is Zn(2+).

Its subcellular location is the cytoplasm. Its function is as follows. Component of the ribosome, a large ribonucleoprotein complex responsible for the synthesis of proteins in the cell. The small ribosomal subunit (SSU) binds messenger RNAs (mRNAs) and translates the encoded message by selecting cognate aminoacyl-transfer RNA (tRNA) molecules. The large subunit (LSU) contains the ribosomal catalytic site termed the peptidyl transferase center (PTC), which catalyzes the formation of peptide bonds, thereby polymerizing the amino acids delivered by tRNAs into a polypeptide chain. The nascent polypeptides leave the ribosome through a tunnel in the LSU and interact with protein factors that function in enzymatic processing, targeting, and the membrane insertion of nascent chains at the exit of the ribosomal tunnel. The protein is Small ribosomal subunit protein eS27 (crp-6) of Neurospora crassa (strain ATCC 24698 / 74-OR23-1A / CBS 708.71 / DSM 1257 / FGSC 987).